A 393-amino-acid chain; its full sequence is Phosphopentomutase (393 aa).

Positions 15, 288, 293, 329, 330, and 341 each coordinate Mn(2+).

Belongs to the phosphopentomutase family. The cofactor is Mn(2+).

Its subcellular location is the cytoplasm. It catalyses the reaction 2-deoxy-alpha-D-ribose 1-phosphate = 2-deoxy-D-ribose 5-phosphate. The catalysed reaction is alpha-D-ribose 1-phosphate = D-ribose 5-phosphate. It functions in the pathway carbohydrate degradation; 2-deoxy-D-ribose 1-phosphate degradation; D-glyceraldehyde 3-phosphate and acetaldehyde from 2-deoxy-alpha-D-ribose 1-phosphate: step 1/2. Functionally, isomerase that catalyzes the conversion of deoxy-ribose 1-phosphate (dRib-1-P) and ribose 1-phosphate (Rib-1-P) to deoxy-ribose 5-phosphate (dRib-5-P) and ribose 5-phosphate (Rib-5-P), respectively. This Halalkalibacterium halodurans (strain ATCC BAA-125 / DSM 18197 / FERM 7344 / JCM 9153 / C-125) (Bacillus halodurans) protein is Phosphopentomutase.